Reading from the N-terminus, the 192-residue chain is GTP cyclohydrolase-2 (192 aa).

Position 50 to 54 (50 to 54 (RLHSE)) interacts with GTP. Residues Cys55, Cys66, and Cys68 each coordinate Zn(2+). GTP is bound by residues 92–94 (EGR) and Thr114. Catalysis depends on Asp126, which acts as the Proton acceptor. Arg128 functions as the Nucleophile in the catalytic mechanism. Thr149 and Lys154 together coordinate GTP.

The protein belongs to the GTP cyclohydrolase II family. Zn(2+) is required as a cofactor.

It catalyses the reaction GTP + 4 H2O = 2,5-diamino-6-hydroxy-4-(5-phosphoribosylamino)-pyrimidine + formate + 2 phosphate + 3 H(+). It functions in the pathway cofactor biosynthesis; riboflavin biosynthesis; 5-amino-6-(D-ribitylamino)uracil from GTP: step 1/4. Catalyzes the conversion of GTP to 2,5-diamino-6-ribosylamino-4(3H)-pyrimidinone 5'-phosphate (DARP), formate and pyrophosphate. The protein is GTP cyclohydrolase-2 of Helicobacter pylori (strain P12).